The following is a 219-amino-acid chain: Protein Ac132 (219 aa).

The disordered stretch occupies residues 1 to 34; that stretch reads MSDKTPTKKGGSHAMTLRERGVTKPPKKSEKLQQ. Residues 16-33 show a composition bias toward basic and acidic residues; sequence TLRERGVTKPPKKSEKLQ. The segment at 103-134 is NEBU-like domain; sequence YPMAYFVNTDYKLKLECARIRSDLLYKNKNEV.

Interacts with viral envelope protein E18 and the DNA-binding protein p6.9.

It localises to the host cytoplasm. The protein localises to the host nucleus. It is found in the virion. Plays an essential role in nucleocapsid entry in host nucleus. May act by binding and stabilizing F-actin in the infected cell, which might attach to nucleocapsids and then push the nucleocapsids into the nucleus. This chain is Protein Ac132 (Ac132), found in Autographa californica nuclear polyhedrosis virus (AcMNPV).